A 143-amino-acid chain; its full sequence is Antiholin-like protein LrgA (143 aa).

4 consecutive transmembrane segments (helical) span residues 6-26, 30-50, 61-81, and 97-117; these read VYSFLSQAFIFSAIMLISNII, LPIPMPSSVIGLVILFSLLCL, LGTALTGIIGFLFVPSGISVI, and VIVVATVILLAVTGLFAQFIL.

This sequence belongs to the CidA/LrgA family. LrgA subfamily.

It is found in the cell membrane. Its function is as follows. Inhibits the expression or activity of extracellular murein hydrolases by interacting, possibly with LrgB, with the holin-like protein CidA. The LrgAB and CidA proteins may affect the proton motive force of the membrane. May be involved in programmed cell death (PCD), possibly triggering PCD in response to antibiotics and environmental stresses. This Bacillus cereus (strain AH820) protein is Antiholin-like protein LrgA.